The primary structure comprises 568 residues: Urease subunit alpha (568 aa).

Residues 130-568 (GGIDTHIHFI…LPMAQRYFLF (439 aa)) form the Urease domain. Positions 135, 137, and 218 each coordinate Ni(2+). Lysine 218 carries the post-translational modification N6-carboxylysine. Histidine 220 contributes to the substrate binding site. 2 residues coordinate Ni(2+): histidine 247 and histidine 273. Residue histidine 321 is the Proton donor of the active site. Residue aspartate 361 participates in Ni(2+) binding.

The protein belongs to the metallo-dependent hydrolases superfamily. Urease alpha subunit family. In terms of assembly, heterotrimer of UreA (gamma), UreB (beta) and UreC (alpha) subunits. Three heterotrimers associate to form the active enzyme. It depends on Ni cation as a cofactor. Post-translationally, carboxylation allows a single lysine to coordinate two nickel ions.

Its subcellular location is the cytoplasm. The catalysed reaction is urea + 2 H2O + H(+) = hydrogencarbonate + 2 NH4(+). The protein operates within nitrogen metabolism; urea degradation; CO(2) and NH(3) from urea (urease route): step 1/1. This chain is Urease subunit alpha, found in Burkholderia vietnamiensis (strain G4 / LMG 22486) (Burkholderia cepacia (strain R1808)).